The following is a 216-amino-acid chain: Imidazole glycerol phosphate synthase subunit HisH (216 aa).

A Glutamine amidotransferase type-1 domain is found at 5 to 213; sequence RLAVIDYDAG…VEFVARRLPA (209 aa). The Nucleophile role is filled by Cys-83. Active-site residues include His-188 and Glu-190.

Heterodimer of HisH and HisF.

The protein localises to the cytoplasm. It carries out the reaction 5-[(5-phospho-1-deoxy-D-ribulos-1-ylimino)methylamino]-1-(5-phospho-beta-D-ribosyl)imidazole-4-carboxamide + L-glutamine = D-erythro-1-(imidazol-4-yl)glycerol 3-phosphate + 5-amino-1-(5-phospho-beta-D-ribosyl)imidazole-4-carboxamide + L-glutamate + H(+). The catalysed reaction is L-glutamine + H2O = L-glutamate + NH4(+). It participates in amino-acid biosynthesis; L-histidine biosynthesis; L-histidine from 5-phospho-alpha-D-ribose 1-diphosphate: step 5/9. Functionally, IGPS catalyzes the conversion of PRFAR and glutamine to IGP, AICAR and glutamate. The HisH subunit catalyzes the hydrolysis of glutamine to glutamate and ammonia as part of the synthesis of IGP and AICAR. The resulting ammonia molecule is channeled to the active site of HisF. This Synechococcus sp. (strain JA-3-3Ab) (Cyanobacteria bacterium Yellowstone A-Prime) protein is Imidazole glycerol phosphate synthase subunit HisH.